Reading from the N-terminus, the 245-residue chain is tRNA pseudouridine synthase A 2 (245 aa).

The active-site Nucleophile is the Asp53. Tyr111 contributes to the substrate binding site.

The protein belongs to the tRNA pseudouridine synthase TruA family. Homodimer.

The catalysed reaction is uridine(38/39/40) in tRNA = pseudouridine(38/39/40) in tRNA. Functionally, formation of pseudouridine at positions 38, 39 and 40 in the anticodon stem and loop of transfer RNAs. The polypeptide is tRNA pseudouridine synthase A 2 (Bacillus cereus (strain ATCC 14579 / DSM 31 / CCUG 7414 / JCM 2152 / NBRC 15305 / NCIMB 9373 / NCTC 2599 / NRRL B-3711)).